We begin with the raw amino-acid sequence, 364 residues long: 3-dehydroquinate synthase (364 aa).

Residues 73-78, 107-111, 131-132, Lys-144, Lys-153, and 171-174 each bind NAD(+); these read DGEQNK, GVIGD, TT, and CLCT. Glu-186, His-249, and His-266 together coordinate Zn(2+).

The protein belongs to the sugar phosphate cyclases superfamily. Dehydroquinate synthase family. Requires NAD(+) as cofactor. It depends on Co(2+) as a cofactor. The cofactor is Zn(2+).

The protein resides in the cytoplasm. The enzyme catalyses 7-phospho-2-dehydro-3-deoxy-D-arabino-heptonate = 3-dehydroquinate + phosphate. It participates in metabolic intermediate biosynthesis; chorismate biosynthesis; chorismate from D-erythrose 4-phosphate and phosphoenolpyruvate: step 2/7. Functionally, catalyzes the conversion of 3-deoxy-D-arabino-heptulosonate 7-phosphate (DAHP) to dehydroquinate (DHQ). This is 3-dehydroquinate synthase from Blochmanniella floridana.